A 477-amino-acid chain; its full sequence is Glycogen synthase (477 aa).

Lys15 is an ADP-alpha-D-glucose binding site.

Belongs to the glycosyltransferase 1 family. Bacterial/plant glycogen synthase subfamily.

The catalysed reaction is [(1-&gt;4)-alpha-D-glucosyl](n) + ADP-alpha-D-glucose = [(1-&gt;4)-alpha-D-glucosyl](n+1) + ADP + H(+). Its pathway is glycan biosynthesis; glycogen biosynthesis. In terms of biological role, synthesizes alpha-1,4-glucan chains using ADP-glucose. The polypeptide is Glycogen synthase (Salmonella arizonae (strain ATCC BAA-731 / CDC346-86 / RSK2980)).